Reading from the N-terminus, the 382-residue chain is V-type proton ATPase subunit C 1 (382 aa).

N-acetylthreonine is present on Thr2.

The protein belongs to the V-ATPase C subunit family. In terms of assembly, V-ATPase is a heteromultimeric enzyme made up of two complexes: the ATP-hydrolytic V1 complex and the proton translocation V0 complex. The V1 complex consists of three catalytic AB heterodimers that form a heterohexamer, three peripheral stalks each consisting of EG heterodimers, one central rotor including subunits D and F, and the regulatory subunits C and H. The proton translocation complex V0 consists of the proton transport subunit a, a ring of proteolipid subunits c9c'', rotary subunit d, subunits e and f, and the accessory subunits ATP6AP1/Ac45 and ATP6AP2/PRR. As to expression, expressed in brain (at protein level).

It is found in the cytoplasmic vesicle. The protein localises to the secretory vesicle. The protein resides in the synaptic vesicle membrane. Its subcellular location is the clathrin-coated vesicle membrane. In terms of biological role, subunit of the V1 complex of vacuolar(H+)-ATPase (V-ATPase), a multisubunit enzyme composed of a peripheral complex (V1) that hydrolyzes ATP and a membrane integral complex (V0) that translocates protons. V-ATPase is responsible for acidifying and maintaining the pH of intracellular compartments and in some cell types, is targeted to the plasma membrane, where it is responsible for acidifying the extracellular environment. Subunit C is necessary for the assembly of the catalytic sector of the enzyme and is likely to have a specific function in its catalytic activity. The protein is V-type proton ATPase subunit C 1 (Atp6v1c1) of Rattus norvegicus (Rat).